The following is a 351-amino-acid chain: Glycerol-3-phosphate dehydrogenase 1-like protein (351 aa).

12 to 17 provides a ligand contact to NAD(+); that stretch reads GSGNWG. Lys-122 lines the substrate pocket. Ala-155 contacts NAD(+). Lys-206 serves as the catalytic Proton acceptor. NAD(+) contacts are provided by Arg-271, Lys-298, and Gln-300. 271–272 contacts substrate; sequence RN.

The protein belongs to the NAD-dependent glycerol-3-phosphate dehydrogenase family. In terms of assembly, interacts with SCN5A.

The protein resides in the cytoplasm. The catalysed reaction is sn-glycerol 3-phosphate + NAD(+) = dihydroxyacetone phosphate + NADH + H(+). Its function is as follows. Plays a role in regulating cardiac sodium current; decreased enzymatic activity with resulting increased levels of glycerol 3-phosphate activating the DPD1L-dependent SCN5A phosphorylation pathway, may ultimately lead to decreased sodium current; cardiac sodium current may also be reduced due to alterations of NAD(H) balance induced by DPD1L. This is Glycerol-3-phosphate dehydrogenase 1-like protein (GPD1L) from Pongo abelii (Sumatran orangutan).